We begin with the raw amino-acid sequence, 263 residues long: Small ribosomal subunit protein uS2 (263 aa).

The span at 223–249 shows a compositional bias: basic and acidic residues; it reads KALREQDGEALANEEKEITDEEKKEVL. The tract at residues 223-263 is disordered; sequence KALREQDGEALANEEKEITDEEKKEVLDEAMSEEDFGEEQE. Residues 250–263 are compositionally biased toward acidic residues; that stretch reads DEAMSEEDFGEEQE.

This sequence belongs to the universal ribosomal protein uS2 family.

The protein is Small ribosomal subunit protein uS2 of Campylobacter jejuni subsp. jejuni serotype O:6 (strain 81116 / NCTC 11828).